The sequence spans 251 residues: CDP-diacylglycerol pyrophosphatase (251 aa).

Residues 4–24 traverse the membrane as a helical segment; sequence AGLLFLVMIVIAVVAAGIGYW.

The protein belongs to the Cdh family.

It is found in the cell inner membrane. It carries out the reaction a CDP-1,2-diacyl-sn-glycerol + H2O = a 1,2-diacyl-sn-glycero-3-phosphate + CMP + 2 H(+). It functions in the pathway phospholipid metabolism; CDP-diacylglycerol degradation; phosphatidate from CDP-diacylglycerol: step 1/1. This is CDP-diacylglycerol pyrophosphatase from Escherichia coli O127:H6 (strain E2348/69 / EPEC).